Here is a 131-residue protein sequence, read N- to C-terminus: Large ribosomal subunit protein bL17 (131 aa).

Belongs to the bacterial ribosomal protein bL17 family. In terms of assembly, part of the 50S ribosomal subunit. Contacts protein L32.

The polypeptide is Large ribosomal subunit protein bL17 (Cupriavidus pinatubonensis (strain JMP 134 / LMG 1197) (Cupriavidus necator (strain JMP 134))).